A 509-amino-acid polypeptide reads, in one-letter code: Subtelomeric hrmA-associated cluster protein AFUB_078990 (509 aa).

In terms of biological role, part of the subtelomeric hrmA-associated cluster (HAC) containing genes that alter the hyphal surface (such as reduced total chitin or increased beta-glucan exposure) and perturb inter-hyphal interactions within the developing biofilms, resulting in a loss of vertically aligned polarized growing filaments. Consequently, this hypoxia-typic morphotype (called H-MORPH) with altered biofilm architecture leads to increased hypoxia fitness, increased host inflammation, rapid disease progression, and mortality in a murine model of invasive aspergillosis. The sequence is that of Subtelomeric hrmA-associated cluster protein AFUB_078990 from Aspergillus fumigatus (strain CBS 144.89 / FGSC A1163 / CEA10) (Neosartorya fumigata).